Here is a 202-residue protein sequence, read N- to C-terminus: Thymidylate kinase (202 aa).

7-14 contacts ATP; the sequence is GIDGSGKT.

The protein belongs to the thymidylate kinase family.

The enzyme catalyses dTMP + ATP = dTDP + ADP. Its function is as follows. Phosphorylation of dTMP to form dTDP in both de novo and salvage pathways of dTTP synthesis. The polypeptide is Thymidylate kinase (Ehrlichia canis (strain Jake)).